A 214-amino-acid polypeptide reads, in one-letter code: Adenylate kinase (214 aa).

Residue 10–15 (GAGKGT) participates in ATP binding. The tract at residues 30–59 (STGDMFRAAIKEGTELGKQAKALMDEGKLV) is NMP. AMP contacts are provided by residues T31, R36, 57–59 (KLV), 85–88 (GFPR), and Q92. The interval 122–159 (GRRVHQPSGRTYHVVYNPPKVEGKDDVTGEDLIIRQDD) is LID. ATP-binding positions include R123 and 132–133 (TY). 2 residues coordinate AMP: R156 and R167. ATP is bound at residue K200.

This sequence belongs to the adenylate kinase family. In terms of assembly, monomer.

The protein localises to the cytoplasm. It catalyses the reaction AMP + ATP = 2 ADP. The protein operates within purine metabolism; AMP biosynthesis via salvage pathway; AMP from ADP: step 1/1. Functionally, catalyzes the reversible transfer of the terminal phosphate group between ATP and AMP. Plays an important role in cellular energy homeostasis and in adenine nucleotide metabolism. This Actinobacillus pleuropneumoniae serotype 5b (strain L20) protein is Adenylate kinase.